Reading from the N-terminus, the 103-residue chain is Small ribosomal subunit protein uS10 (103 aa).

Belongs to the universal ribosomal protein uS10 family. In terms of assembly, part of the 30S ribosomal subunit.

Involved in the binding of tRNA to the ribosomes. The protein is Small ribosomal subunit protein uS10 of Mycoplasmopsis pulmonis (strain UAB CTIP) (Mycoplasma pulmonis).